A 415-amino-acid polypeptide reads, in one-letter code: Putative serine/threonine-protein phosphatase 4 regulatory subunit 1-like (415 aa).

HEAT repeat units lie at residues valine 86–proline 124, leucine 163–phenylalanine 202, leucine 203–glutamine 241, and leucine 242–leucine 280. Positions phenylalanine 301–serine 318 are enriched in low complexity. The tract at residues phenylalanine 301–cysteine 362 is disordered.

Its function is as follows. May be a regulatory subunit of serine/threonine-protein phosphatase 4. The polypeptide is Putative serine/threonine-protein phosphatase 4 regulatory subunit 1-like (PPP4R1L) (Homo sapiens (Human)).